The sequence spans 423 residues: Protein phosphatase 2C 77 (423 aa).

Residues 74-95 (GDEINGSDEFDPRSMNQSEKKV) form a disordered region. The PPM-type phosphatase domain maps to 112-411 (LYGVTSICGR…DNISVVVVDL (300 aa)). D165, D251, and S252 together coordinate Mg(2+). A disulfide bridge links C257 with C331. Positions 337 and 402 each coordinate Mg(2+).

Belongs to the PP2C family. In terms of assembly, interacts with SPK1, CIPK15/PKS3, GPX3, SCAR1, SCAR2, SCAR3 and SCARL. Also interacts with CIPK24/SOS2. Binds to the fibrillin precursor protein. Interacts with ABA-bounded PYR1, PYL1, PYL2, PYL3, PYL4, PYL5, PYL6, PYL8 and PYL9, and with free PYL2, PYL3 and PYL4. Interacts with and represses GHR1, and, to a lesser extent, SRK2E/OST1. The cofactor is Mg(2+). It depends on Mn(2+) as a cofactor.

The catalysed reaction is O-phospho-L-seryl-[protein] + H2O = L-seryl-[protein] + phosphate. It carries out the reaction O-phospho-L-threonyl-[protein] + H2O = L-threonyl-[protein] + phosphate. Phosphatase activity repressed by oxidized ATGPX3, free fatty acids (e.g. arachidonic acid (20:4) and Linolenic acid (18:3)) and by H(2)O(2). Repressed by PYR/PYL/RCAR ABA receptors in an ABA-dependent manner. In terms of biological role, repressor of the abscisic acid (ABA) signaling pathway that regulates numerous ABA responses, such as stomatal closure, osmotic water permeability of the plasma membrane (Pos), high light stress, response to glucose, seed germination and inhibition of vegetative growth. During the stomatal closure regulation, modulates the inward calcium-channel permeability as well as H(2)O(2) and oxidative burst in response to ABA and dehydration. Represses GHR1 and, to some extent, SRK2E/OST1, kinases involved in the regulation of SLAC1-dependent stomatal closure. Controls negatively fibrillin that is involved in mediating ABA-induced photoprotection. May be implicated in ABA content regulation. Involved in acquired thermotolerance of root growth and seedling survival. Required for the Erwinia amylovora harpin-induced (HrpN) drought tolerance. Involved in the hydrotropic response. The chain is Protein phosphatase 2C 77 from Arabidopsis thaliana (Mouse-ear cress).